A 268-amino-acid polypeptide reads, in one-letter code: Proenkephalin-A (268 aa).

Positions 1–24 (MARFLRLCTWLLALGSCLLATVQA) are cleaved as a signal peptide. 3 disulfide bridges follow: Cys-26–Cys-48, Cys-30–Cys-52, and Cys-33–Cys-65. Positions 163–184 (TGDNRAKDSHQQESTNNDEDMS) are disordered. 2 consecutive propeptides follow at residues 197–208 (SPQLEDEAKELQ) and 218–228 (VGRPEWWMDYQ). Phosphoserine is present on Ser-252.

Belongs to the opioid neuropeptide precursor family. Post-translationally, proenkephalin-A is cleaved by CTSL to generate Met-enkephalin. In terms of processing, processed and degraded by ACE. Probably cleaved by ACE. Post-translationally, processed by ACE to generate Met-enkephalin in the nucleus accumbens of the brain. In terms of processing, the N-terminal domain contains 6 conserved cysteines thought to be involved in disulfide bonding and/or processing. Spermatogenic and somatic cells.

Its subcellular location is the cytoplasmic vesicle. It localises to the secretory vesicle. The protein localises to the chromaffin granule lumen. It is found in the secreted. In terms of biological role, neuropeptide that competes with and mimic the effects of opiate drugs. They play a role in a number of physiologic functions, including pain perception and responses to stress. Its function is as follows. Met-enkephalin-Arg-Phe neuropeptide acts as a strong ligand of Mu-type opioid receptor OPRM1. Met-enkephalin-Arg-Phe-binding to OPRM1 in the nucleus accumbens of the brain increases activation of OPRM1, leading to long-term synaptic depression of glutamate release. Functionally, increases glutamate release in the striatum and decreases GABA concentration in the striatum. Increases glutamate release in the striatum. The chain is Proenkephalin-A (Penk) from Mus musculus (Mouse).